We begin with the raw amino-acid sequence, 308 residues long: tRNA pseudouridine synthase B (308 aa).

The Nucleophile role is filled by aspartate 49.

Belongs to the pseudouridine synthase TruB family. Type 1 subfamily.

It catalyses the reaction uridine(55) in tRNA = pseudouridine(55) in tRNA. Its function is as follows. Responsible for synthesis of pseudouridine from uracil-55 in the psi GC loop of transfer RNAs. The chain is tRNA pseudouridine synthase B from Nitrosococcus oceani (strain ATCC 19707 / BCRC 17464 / JCM 30415 / NCIMB 11848 / C-107).